Here is a 373-residue protein sequence, read N- to C-terminus: Opsin Rh1 (373 aa).

Topologically, residues 1-54 (MDSFAAVATQLGPHFAALSNGSVVDKVTPDMAHLISPYWNQFPAMDPIWAKILT) are extracellular. A glycan (N-linked (GlcNAc...) asparagine) is linked at asparagine 20. Residues 55 to 75 (AYMIIIGMISWCGNGVVIYIF) form a helical membrane-spanning segment. Topologically, residues 76-86 (ATTKSLRTPAN) are cytoplasmic. A helical membrane pass occupies residues 87-107 (LLVINLAISDFGIMITNTPMM). At 108–124 (GINLYFETWVLGPMMCD) the chain is on the extracellular side. A disulfide bridge links cysteine 123 with cysteine 200. The helical transmembrane segment at 125 to 145 (IYAGLGSAFGCSSIWSMCMIS) threads the bilayer. Residues 146–162 (LDRYQVIVKGMAGRPMT) lie on the Cytoplasmic side of the membrane. A helical membrane pass occupies residues 163-183 (IPLALGKIAYIWFMSSIWCLA). Residues 184 to 219 (PVFGWSRYVPEGNLTSCGIDYLERDWNPRSYLIFYS) are Extracellular-facing. Asparagine 196 carries an N-linked (GlcNAc...) asparagine glycan. A helical membrane pass occupies residues 220-240 (IFVYYIPLFLICYSYWFIIAA). Residues 241–276 (VSAHEKAMREQAKKMNVKSLRSSEDADKSAEGKLAK) lie on the Cytoplasmic side of the membrane. Residues 277 to 297 (VALVTISLWFMAWTPYLVINC) traverse the membrane as a helical segment. The Extracellular segment spans residues 298-308 (MGLFKFEGLTP). A helical transmembrane segment spans residues 309 to 331 (LNTIWGACFAKSAACYNPIVYGI). An N6-(retinylidene)lysine modification is found at lysine 319. At 332–373 (SHPKYRLALKEKCPCCVFGKVDDGKSSEAQSQATNSEAESKA) the chain is on the cytoplasmic side. Residues 354-373 (DGKSSEAQSQATNSEAESKA) are disordered. Residues 358-373 (SEAQSQATNSEAESKA) show a composition bias toward polar residues.

The protein belongs to the G-protein coupled receptor 1 family. Opsin subfamily. Phosphorylated on some or all of the serine and threonine residues present in the C-terminal region.

The protein localises to the cell projection. The protein resides in the rhabdomere membrane. Functionally, visual pigments are the light-absorbing molecules that mediate vision. They consist of an apoprotein, opsin, covalently linked to cis-retinal. The chain is Opsin Rh1 (ninaE) from Drosophila pseudoobscura pseudoobscura (Fruit fly).